Reading from the N-terminus, the 300-residue chain is Type II restriction enzyme HindIII (300 aa).

It carries out the reaction Endonucleolytic cleavage of DNA to give specific double-stranded fragments with terminal 5'-phosphates.. Functionally, a P subtype restriction enzyme that recognizes the double-stranded sequence 5'-AAGCTT-3' and cleaves after A-1. In Haemophilus influenzae (strain ATCC 51907 / DSM 11121 / KW20 / Rd), this protein is Type II restriction enzyme HindIII.